A 457-amino-acid polypeptide reads, in one-letter code: MQHDDTIAAIATPLGQGGIGIIRISGPASLEVLRALFRPSSSRFGGFRPWTLHHGTITDGCDPLDDVLAVHMPGPRTFTGEDVSEIHCHGGSGVLAAVLEACVRHGARYAERGEFTRRAFLNGRMDLTQAEAVAEMIAAPSREGMRLAQAKLDGLLGQRVGALRARLDALRMQLCVAVDFPEEEVECLAPEAFLAEIEAVRQGVVELSAGYARTRCWQDGALVVLAGQVNAGKSSLMNALLGRRRAIVTDLPGTTRDFIEEPLNLSGLAIRLADTAGLRETGDIVEQEGVRMSRDLVAQADLVLLVTDATQGLQGPELELLRHAGPERVLVVFNKTDLLEGRILPSAPEGCRSVHVAAASGDGVESLVTAIRAAVLAATGAGEPEAGELAPNMRQAAALDKAATILDELAGDIRAHVPYDLCGVRLDGACAALMDVTGQSTPEAILDAIFASFCIGK.

Positions 23, 85, and 124 each coordinate (6S)-5-formyl-5,6,7,8-tetrahydrofolate. The region spanning 220 to 376 is the TrmE-type G domain; the sequence is GALVVLAGQV…LVTAIRAAVL (157 aa). Position 230 (asparagine 230) interacts with K(+). GTP-binding positions include 230-235, 249-255, and 274-277; these read NAGKSS, TDLPGTT, and DTAG. Mg(2+) is bound at residue serine 234. K(+)-binding residues include threonine 249, leucine 251, and threonine 254. Residue threonine 255 coordinates Mg(2+). Lysine 457 lines the (6S)-5-formyl-5,6,7,8-tetrahydrofolate pocket.

Belongs to the TRAFAC class TrmE-Era-EngA-EngB-Septin-like GTPase superfamily. TrmE GTPase family. As to quaternary structure, homodimer. Heterotetramer of two MnmE and two MnmG subunits. K(+) serves as cofactor.

It is found in the cytoplasm. In terms of biological role, exhibits a very high intrinsic GTPase hydrolysis rate. Involved in the addition of a carboxymethylaminomethyl (cmnm) group at the wobble position (U34) of certain tRNAs, forming tRNA-cmnm(5)s(2)U34. In Nitratidesulfovibrio vulgaris (strain DP4) (Desulfovibrio vulgaris), this protein is tRNA modification GTPase MnmE.